Here is a 168-residue protein sequence, read N- to C-terminus: 3-hydroxyacyl-[acyl-carrier-protein] dehydratase FabZ (168 aa).

The active site involves histidine 54.

Belongs to the thioester dehydratase family. FabZ subfamily.

The protein localises to the cytoplasm. It carries out the reaction a (3R)-hydroxyacyl-[ACP] = a (2E)-enoyl-[ACP] + H2O. Functionally, involved in unsaturated fatty acids biosynthesis. Catalyzes the dehydration of short chain beta-hydroxyacyl-ACPs and long chain saturated and unsaturated beta-hydroxyacyl-ACPs. This is 3-hydroxyacyl-[acyl-carrier-protein] dehydratase FabZ from Yersinia enterocolitica serotype O:8 / biotype 1B (strain NCTC 13174 / 8081).